The primary structure comprises 99 residues: Integration host factor subunit alpha (99 aa).

This sequence belongs to the bacterial histone-like protein family. In terms of assembly, heterodimer of an alpha and a beta chain.

Its function is as follows. This protein is one of the two subunits of integration host factor, a specific DNA-binding protein that functions in genetic recombination as well as in transcriptional and translational control. The sequence is that of Integration host factor subunit alpha from Enterobacter sp. (strain 638).